The primary structure comprises 1157 residues: Hephaestin (1157 aa).

The first 23 residues, 1–23 (MKAGHLLWALLLMHSLCSLPTDG), serve as a signal peptide directing secretion. 6 consecutive Plastocyanin-like domains span residues 24 to 206 (AIRN…LITC), 218 to 366 (QRKD…VDSC), 370 to 559 (PPVE…LLVC), 569 to 717 (KQKG…VSQC), 730 to 902 (ASRV…LVIC), and 910 to 1066 (NGGR…SHEE). The Extracellular segment spans residues 24 to 1109 (AIRNYYLGIQ…PVKNVEILSS (1086 aa)). N-linked (GlcNAc...) asparagine glycans are attached at residues Asn49 and Asn54. Na(+) contacts are provided by Gly70 and Tyr73. His126 and His128 together coordinate Cu(2+). His126 contacts O2. 3 residues coordinate Ca(2+): Lys134, Asp152, and Asp153. Residue Asn164 is glycosylated (N-linked (GlcNAc...) asparagine). Cys180 and Cys206 are oxidised to a cystine. Positions 186 and 188 each coordinate Cu(2+). His186 is an O2 binding site. N-linked (GlcNAc...) asparagine glycosylation is present at Asn236. Ser265 provides a ligand contact to Na(+). Cys285 and Cys366 are joined by a disulfide. Cu(2+) contacts are provided by His304, Cys347, and His352. 3 residues coordinate Na(+): Tyr416, Gly425, and Tyr428. An intrachain disulfide couples Cys533 to Cys559. Asn587 carries an N-linked (GlcNAc...) asparagine glycan. Ser616 contributes to the Na(+) binding site. An intrachain disulfide couples Cys636 to Cys717. Positions 655, 698, 703, and 708 each coordinate Cu(2+). Asn713 and Asn757 each carry an N-linked (GlcNAc...) asparagine glycan. 2 residues coordinate Na(+): Phe768 and Gly777. A disulfide bond links Cys876 and Cys902. Asn930 carries N-linked (GlcNAc...) asparagine glycosylation. Cu(2+) is bound by residues His999, His1002, His1004, His1044, Cys1045, His1046, His1050, and Met1055. His1002 and His1004 together coordinate O2. His1046 serves as a coordination point for O2. The chain crosses the membrane as a helical span at residues 1110-1130 (ALIAICVVLLLIALALGGVVW). The Cytoplasmic portion of the chain corresponds to 1131 to 1157 (YQHRQRKLRRNRRSILDDSFKLLSLKQ). Phosphoserine occurs at positions 1144, 1149, and 1154.

This sequence belongs to the multicopper oxidase family. In terms of assembly, part of a complex composed of SLC40A1/ferroportin, TF/transferrin and HEPH/hephaestin that transfers iron from cells to transferrin. The cofactor is Cu cation. Highly expressed in small intestine and colon.

It localises to the basolateral cell membrane. It catalyses the reaction 4 Fe(2+) + O2 + 4 H(+) = 4 Fe(3+) + 2 H2O. Functionally, plasma membrane ferroxidase that mediates the extracellular conversion of ferrous/Fe(2+) iron into its ferric/Fe(3+) form. Couples ferroportin which specifically exports ferrous/Fe(2+) iron from cells to transferrin that only binds and shuttles extracellular ferric/Fe(3+) iron throughout the body. By helping iron transfer from cells to blood mainly contributes to dietary iron absorption by the intestinal epithelium and more generally regulates iron levels in the body. The polypeptide is Hephaestin (Rattus norvegicus (Rat)).